A 426-amino-acid polypeptide reads, in one-letter code: Enolase (426 aa).

A (2R)-2-phosphoglycerate-binding site is contributed by Gln-163. Glu-205 (proton donor) is an active-site residue. 3 residues coordinate Mg(2+): Asp-242, Glu-285, and Asp-312. Positions 337, 366, 367, and 388 each coordinate (2R)-2-phosphoglycerate. The Proton acceptor role is filled by Lys-337.

The protein belongs to the enolase family. Mg(2+) serves as cofactor.

The protein resides in the cytoplasm. Its subcellular location is the secreted. The protein localises to the cell surface. It carries out the reaction (2R)-2-phosphoglycerate = phosphoenolpyruvate + H2O. The protein operates within carbohydrate degradation; glycolysis; pyruvate from D-glyceraldehyde 3-phosphate: step 4/5. Catalyzes the reversible conversion of 2-phosphoglycerate (2-PG) into phosphoenolpyruvate (PEP). It is essential for the degradation of carbohydrates via glycolysis. The sequence is that of Enolase from Gluconobacter oxydans (strain 621H) (Gluconobacter suboxydans).